We begin with the raw amino-acid sequence, 174 residues long: Crossover junction endodeoxyribonuclease RuvC (174 aa).

Active-site residues include D8, E67, and D139. Residues D8, E67, and D139 each coordinate Mg(2+).

It belongs to the RuvC family. In terms of assembly, homodimer which binds Holliday junction (HJ) DNA. The HJ becomes 2-fold symmetrical on binding to RuvC with unstacked arms; it has a different conformation from HJ DNA in complex with RuvA. In the full resolvosome a probable DNA-RuvA(4)-RuvB(12)-RuvC(2) complex forms which resolves the HJ. Mg(2+) is required as a cofactor.

It is found in the cytoplasm. The catalysed reaction is Endonucleolytic cleavage at a junction such as a reciprocal single-stranded crossover between two homologous DNA duplexes (Holliday junction).. The RuvA-RuvB-RuvC complex processes Holliday junction (HJ) DNA during genetic recombination and DNA repair. Endonuclease that resolves HJ intermediates. Cleaves cruciform DNA by making single-stranded nicks across the HJ at symmetrical positions within the homologous arms, yielding a 5'-phosphate and a 3'-hydroxyl group; requires a central core of homology in the junction. The consensus cleavage sequence is 5'-(A/T)TT(C/G)-3'. Cleavage occurs on the 3'-side of the TT dinucleotide at the point of strand exchange. HJ branch migration catalyzed by RuvA-RuvB allows RuvC to scan DNA until it finds its consensus sequence, where it cleaves and resolves the cruciform DNA. This chain is Crossover junction endodeoxyribonuclease RuvC, found in Pseudomonas fluorescens (strain SBW25).